The chain runs to 817 residues: Leucine--tRNA ligase (817 aa).

The 'HIGH' region motif lies at 42–52 (PYPSGKLHMGH). Residues 576-580 (KMSKS) carry the 'KMSKS' region motif. Lysine 579 contacts ATP.

It belongs to the class-I aminoacyl-tRNA synthetase family.

The protein resides in the cytoplasm. It carries out the reaction tRNA(Leu) + L-leucine + ATP = L-leucyl-tRNA(Leu) + AMP + diphosphate. This is Leucine--tRNA ligase from Methylobacillus flagellatus (strain ATCC 51484 / DSM 6875 / VKM B-1610 / KT).